Consider the following 323-residue polypeptide: CTD kinase subunit beta (323 aa).

Belongs to the cyclin family. In terms of assembly, CTDK-I consists of three subunits, CTK1, CTK2 and CTK3 (also called alpha, beta and gamma). Interacts with CTK1. Heterodimerization with CTK3 is required to protect this subunit from degradation. Phosphorylated. Ubiquitinated. Phosphorylation and ubiquitination lead to degradation in growth-related way by the ubiquitin-proteasome pathway. Neither phosphorylation nor degradation requires association with CTK1.

It localises to the nucleus. Its subcellular location is the nucleolus. Functionally, cyclin subunit of the CTDK-I complex, which hyperphosphorylates the C-terminal heptapeptide repeat domain (CTD) of the largest RNA polymerase II subunit. CTDK-I phosphorylates 'Ser-5' if the CTD substrate is not phosphorylated at 'Ser-5', but will phosphorylate 'Ser-2' of a CTD substrate if 'Ser-5' is already phosphorylated. CTDK-I is also more reactive toward substrates that are prephosphorylated at 'Ser-2' or 'Ser-5' compared with an unphosphorylated CTD substrate, therefore efficiently creating doubly phosphorylated CTD repeats. Involved in RNA polymerase II transcriptional elongation, and as part of the CTDK-I complex, pre-mRNA 3'-end processing and SET2 mediated H3K36 methylation. Together with CTK3, required for CTK1 CTD kinase activation. Required for DNA damage induced transcription. Involved in the adaptation to alternative carbon sources, including galactose, glycerol and ethanol, but not raffinose. Required for the integrity of the rDNA locus. This chain is CTD kinase subunit beta (CTK2), found in Saccharomyces cerevisiae (strain ATCC 204508 / S288c) (Baker's yeast).